The primary structure comprises 149 residues: Transcriptional repressor NrdR (149 aa).

A zinc finger lies at C3 to C34. In terms of domain architecture, ATP-cone spans P49–E139.

This sequence belongs to the NrdR family. The cofactor is Zn(2+).

Its function is as follows. Negatively regulates transcription of bacterial ribonucleotide reductase nrd genes and operons by binding to NrdR-boxes. The polypeptide is Transcriptional repressor NrdR (Escherichia fergusonii (strain ATCC 35469 / DSM 13698 / CCUG 18766 / IAM 14443 / JCM 21226 / LMG 7866 / NBRC 102419 / NCTC 12128 / CDC 0568-73)).